A 414-amino-acid polypeptide reads, in one-letter code: Probable mannose-1-phosphate guanyltransferase (414 aa).

The protein belongs to the transferase hexapeptide repeat family.

The protein resides in the cytoplasm. Its subcellular location is the nucleus. It carries out the reaction alpha-D-mannose 1-phosphate + GTP + H(+) = GDP-alpha-D-mannose + diphosphate. It participates in nucleotide-sugar biosynthesis; GDP-alpha-D-mannose biosynthesis; GDP-alpha-D-mannose from alpha-D-mannose 1-phosphate (GTP route): step 1/1. In terms of biological role, involved in cell wall synthesis where it is required for glycosylation. This is Probable mannose-1-phosphate guanyltransferase from Schizosaccharomyces pombe (strain 972 / ATCC 24843) (Fission yeast).